The following is a 797-amino-acid chain: Xaa-Pro dipeptidyl-peptidase (797 aa).

Catalysis depends on charge relay system residues Ser370, Asp490, and His521.

Belongs to the peptidase S15 family. Homodimer.

Its subcellular location is the cytoplasm. The enzyme catalyses Hydrolyzes Xaa-Pro-|- bonds to release unblocked, N-terminal dipeptides from substrates including Ala-Pro-|-p-nitroanilide and (sequentially) Tyr-Pro-|-Phe-Pro-|-Gly-Pro-|-Ile.. Its function is as follows. Removes N-terminal dipeptides sequentially from polypeptides having unsubstituted N-termini provided that the penultimate residue is proline. This is Xaa-Pro dipeptidyl-peptidase from Lacticaseibacillus rhamnosus (Lactobacillus rhamnosus).